The following is a 309-amino-acid chain: UDP-N-acetylenolpyruvoylglucosamine reductase (309 aa).

The FAD-binding PCMH-type domain maps to 34 to 221 (RVGGPAQVLF…TAAREAAQPI (188 aa)). Residue Arg-179 is part of the active site. The active-site Proton donor is the Ser-228. The active site involves Glu-298.

It belongs to the MurB family. It depends on FAD as a cofactor.

The protein localises to the cytoplasm. The catalysed reaction is UDP-N-acetyl-alpha-D-muramate + NADP(+) = UDP-N-acetyl-3-O-(1-carboxyvinyl)-alpha-D-glucosamine + NADPH + H(+). Its pathway is cell wall biogenesis; peptidoglycan biosynthesis. In terms of biological role, cell wall formation. This chain is UDP-N-acetylenolpyruvoylglucosamine reductase, found in Methylorubrum populi (strain ATCC BAA-705 / NCIMB 13946 / BJ001) (Methylobacterium populi).